The following is a 540-amino-acid chain: Glucose-6-phosphate isomerase (540 aa).

The Proton donor role is filled by glutamate 346. Active-site residues include histidine 377 and lysine 505.

It belongs to the GPI family.

It is found in the cytoplasm. The enzyme catalyses alpha-D-glucose 6-phosphate = beta-D-fructose 6-phosphate. Its pathway is carbohydrate biosynthesis; gluconeogenesis. It participates in carbohydrate degradation; glycolysis; D-glyceraldehyde 3-phosphate and glycerone phosphate from D-glucose: step 2/4. Functionally, catalyzes the reversible isomerization of glucose-6-phosphate to fructose-6-phosphate. This Francisella tularensis subsp. tularensis (strain WY96-3418) protein is Glucose-6-phosphate isomerase.